The chain runs to 488 residues: Zinc finger protein 345 (488 aa).

15 C2H2-type zinc fingers span residues 62-84, 90-112, 118-140, 146-168, 174-196, 202-224, 230-252, 258-280, 286-308, 314-336, 342-364, 370-392, 398-420, 426-448, and 454-476; these read LECK…QRIH, YECK…QRIH, FECK…QRIH, YECK…QIIH, YECK…HRIH, YECI…RRIH, YICN…QRIH, YVCK…QRIH, YECK…QRMH, YECK…QLIH, and YECK…KKSH.

Belongs to the krueppel C2H2-type zinc-finger protein family.

It localises to the nucleus. May be involved in transcriptional regulation. This chain is Zinc finger protein 345 (ZNF345), found in Homo sapiens (Human).